Reading from the N-terminus, the 399-residue chain is Elongation factor Tu (399 aa).

A tr-type G domain is found at 10–208 (KPHVNIGTIG…TVDSYIPEPE (199 aa)). The G1 stretch occupies residues 19–26 (GHVDHGKT). 19 to 26 (GHVDHGKT) is a binding site for GTP. Mg(2+) is bound at residue Thr-26. A G2 region spans residues 64-68 (GITIN). The tract at residues 85–88 (DAPG) is G3. Residues 85 to 89 (DAPGH) and 140 to 143 (NKVD) contribute to the GTP site. The G4 stretch occupies residues 140–143 (NKVD). The tract at residues 178 to 180 (SAL) is G5.

The protein belongs to the TRAFAC class translation factor GTPase superfamily. Classic translation factor GTPase family. EF-Tu/EF-1A subfamily. In terms of assembly, monomer.

The protein localises to the cytoplasm. It carries out the reaction GTP + H2O = GDP + phosphate + H(+). In terms of biological role, GTP hydrolase that promotes the GTP-dependent binding of aminoacyl-tRNA to the A-site of ribosomes during protein biosynthesis. In Streptococcus pyogenes serotype M12 (strain MGAS2096), this protein is Elongation factor Tu.